The following is a 442-amino-acid chain: tRNA modification GTPase MnmE (442 aa).

(6S)-5-formyl-5,6,7,8-tetrahydrofolate contacts are provided by Arg22, Glu79, and Lys119. In terms of domain architecture, TrmE-type G spans 216–366; the sequence is GIKTCLVGAP…LLEKIKSIFA (151 aa). Asn226 provides a ligand contact to K(+). GTP is bound by residues 226–231, 245–251, and 270–273; these read NSGKSS, SEIPGTT, and DTAG. Ser230 contributes to the Mg(2+) binding site. Positions 245, 247, and 250 each coordinate K(+). Thr251 lines the Mg(2+) pocket. Position 442 (Lys442) interacts with (6S)-5-formyl-5,6,7,8-tetrahydrofolate.

The protein belongs to the TRAFAC class TrmE-Era-EngA-EngB-Septin-like GTPase superfamily. TrmE GTPase family. As to quaternary structure, homodimer. Heterotetramer of two MnmE and two MnmG subunits. K(+) serves as cofactor.

The protein resides in the cytoplasm. In terms of biological role, exhibits a very high intrinsic GTPase hydrolysis rate. Involved in the addition of a carboxymethylaminomethyl (cmnm) group at the wobble position (U34) of certain tRNAs, forming tRNA-cmnm(5)s(2)U34. This chain is tRNA modification GTPase MnmE, found in Mesomycoplasma hyopneumoniae (strain 232) (Mycoplasma hyopneumoniae).